We begin with the raw amino-acid sequence, 566 residues long: Arginine--tRNA ligase (566 aa).

The short motif at Pro-121–His-131 is the 'HIGH' region element.

This sequence belongs to the class-I aminoacyl-tRNA synthetase family. As to quaternary structure, monomer.

It localises to the cytoplasm. The enzyme catalyses tRNA(Arg) + L-arginine + ATP = L-arginyl-tRNA(Arg) + AMP + diphosphate. The polypeptide is Arginine--tRNA ligase (Oenococcus oeni (strain ATCC BAA-331 / PSU-1)).